We begin with the raw amino-acid sequence, 701 residues long: MNPVIKKFQFGQSTVTLETGRIARQASGAVLVTVDDDVSVLVTVVGAKTADPSKGFFPLSVHYQEKTYAAGKIPGGFFKREARPSEKETLTSRLIDRPIRPLFPEGFQNEVQVICTVVSTSKKTDPDIAAMIGTSAALAVSGIPFDGPIGAARVAFHPETGYLLNPNYEQLKASSLDMVVAGTKDAVLMVESEAKELTEDQMLGAVLFAHDEFQAVIKAVEELAAEAGKPRWDWTAPQANTALLDAIRSEFGAAISEAYTITIKQQRYARLDELREQVVAKFSGEEGQPSGGEVKDAFGEIEYRTVRENIVNGKPRIDGRDTRTVRPLAIEVGVLDKTHGSALFTRGETQALVVATLGTARDAQLLDTLEGEKKDAFMLHYNFPPYSVGECGRMGATGRREIGHGRLARRGVAAMLPSADEFPYTIRVVSEITESNGSSSMASVCGASLALMDAGVPMKAPVAGIAMGLVKEGEKFAVLTDILGDEDHLGDMDFKVAGTAKGVTALQMDIKIQGITEEIMEIALGQALEARLNILGQMSQVIAQSRSELSANAPTMLAMKIDQDKIRDVIGKGGATIRAICEETKASIDIEDDGSIKIFGETKEAAEAAKQRVLSITAEAEIGKIYVGKVERIVDFGAFVNILPGKDGLVHISQISDQRIEKVTDVLKEGQEVKVLVLDVDNRGRIKLSIKDVAAAEASGV.

Aspartate 487 and aspartate 493 together coordinate Mg(2+). The KH domain occupies 554 to 613 (PTMLAMKIDQDKIRDVIGKGGATIRAICEETKASIDIEDDGSIKIFGETKEAAEAAKQRV). Residues 623–691 (GKIYVGKVER…NRGRIKLSIK (69 aa)) enclose the S1 motif domain.

This sequence belongs to the polyribonucleotide nucleotidyltransferase family. In terms of assembly, component of the RNA degradosome, which is a multiprotein complex involved in RNA processing and mRNA degradation. Mg(2+) serves as cofactor.

It is found in the cytoplasm. The enzyme catalyses RNA(n+1) + phosphate = RNA(n) + a ribonucleoside 5'-diphosphate. Involved in mRNA degradation. Catalyzes the phosphorolysis of single-stranded polyribonucleotides processively in the 3'- to 5'-direction. The protein is Polyribonucleotide nucleotidyltransferase of Stutzerimonas stutzeri (strain A1501) (Pseudomonas stutzeri).